A 353-amino-acid polypeptide reads, in one-letter code: ATP-dependent kinase YFH7 (353 aa).

31–39 serves as a coordination point for ATP; sequence GSPGSGKST.

It belongs to the YFH7 family.

ATP-dependent kinase that could be involved in endoplasmic reticulum membrane assembly. The chain is ATP-dependent kinase YFH7 (YFH7) from Saccharomyces cerevisiae (strain ATCC 204508 / S288c) (Baker's yeast).